Here is a 240-residue protein sequence, read N- to C-terminus: Sugar fermentation stimulation protein homolog (240 aa).

It belongs to the SfsA family.

The sequence is that of Sugar fermentation stimulation protein homolog from Methanothermobacter thermautotrophicus (strain ATCC 29096 / DSM 1053 / JCM 10044 / NBRC 100330 / Delta H) (Methanobacterium thermoautotrophicum).